The chain runs to 362 residues: Phosphoserine aminotransferase (362 aa).

Residues Ser9 and Arg42 each coordinate L-glutamate. Pyridoxal 5'-phosphate is bound by residues 76–77, Trp102, Thr153, Asp174, and Gln197; that span reads GR. N6-(pyridoxal phosphate)lysine is present on Lys198. 239–240 serves as a coordination point for pyridoxal 5'-phosphate; the sequence is NT.

This sequence belongs to the class-V pyridoxal-phosphate-dependent aminotransferase family. SerC subfamily. As to quaternary structure, homodimer. Pyridoxal 5'-phosphate is required as a cofactor.

The protein resides in the cytoplasm. The enzyme catalyses O-phospho-L-serine + 2-oxoglutarate = 3-phosphooxypyruvate + L-glutamate. It catalyses the reaction 4-(phosphooxy)-L-threonine + 2-oxoglutarate = (R)-3-hydroxy-2-oxo-4-phosphooxybutanoate + L-glutamate. It functions in the pathway amino-acid biosynthesis; L-serine biosynthesis; L-serine from 3-phospho-D-glycerate: step 2/3. The protein operates within cofactor biosynthesis; pyridoxine 5'-phosphate biosynthesis; pyridoxine 5'-phosphate from D-erythrose 4-phosphate: step 3/5. Functionally, catalyzes the reversible conversion of 3-phosphohydroxypyruvate to phosphoserine and of 3-hydroxy-2-oxo-4-phosphonooxybutanoate to phosphohydroxythreonine. This is Phosphoserine aminotransferase from Salmonella choleraesuis (strain SC-B67).